Consider the following 446-residue polypeptide: Ribulose bisphosphate carboxylase large chain (446 aa).

Substrate contacts are provided by Asn89 and Thr139. Residue Lys141 is the Proton acceptor of the active site. Residue Lys143 participates in substrate binding. The Mg(2+) site is built by Lys167, Asp169, and Glu170. The residue at position 167 (Lys167) is an N6-carboxylysine. Catalysis depends on His260, which acts as the Proton acceptor. Residues Arg261, His293, and Ser345 each contribute to the substrate site.

It belongs to the RuBisCO large chain family. Type I subfamily. Heterohexadecamer of 8 large chains and 8 small chains; disulfide-linked. The disulfide link is formed within the large subunit homodimers. The cofactor is Mg(2+). The disulfide bond which can form in the large chain dimeric partners within the hexadecamer appears to be associated with oxidative stress and protein turnover.

The protein localises to the plastid. It is found in the chloroplast. It carries out the reaction 2 (2R)-3-phosphoglycerate + 2 H(+) = D-ribulose 1,5-bisphosphate + CO2 + H2O. It catalyses the reaction D-ribulose 1,5-bisphosphate + O2 = 2-phosphoglycolate + (2R)-3-phosphoglycerate + 2 H(+). RuBisCO catalyzes two reactions: the carboxylation of D-ribulose 1,5-bisphosphate, the primary event in carbon dioxide fixation, as well as the oxidative fragmentation of the pentose substrate in the photorespiration process. Both reactions occur simultaneously and in competition at the same active site. The protein is Ribulose bisphosphate carboxylase large chain of Exacum affine (Persian violet).